Here is a 475-residue protein sequence, read N- to C-terminus: Ribulose bisphosphate carboxylase large chain (475 aa).

Residues 1–2 (MS) constitute a propeptide that is removed on maturation. At P3 the chain carries N-acetylproline. An N6,N6,N6-trimethyllysine modification is found at K14. The substrate site is built by N123 and T173. The active-site Proton acceptor is the K175. Residue K177 participates in substrate binding. Residues K201, D203, and E204 each contribute to the Mg(2+) site. Position 201 is an N6-carboxylysine (K201). H294 (proton acceptor) is an active-site residue. Substrate-binding residues include R295, H327, and S379.

It belongs to the RuBisCO large chain family. Type I subfamily. As to quaternary structure, heterohexadecamer of 8 large chains and 8 small chains; disulfide-linked. The disulfide link is formed within the large subunit homodimers. Mg(2+) is required as a cofactor. Post-translationally, the disulfide bond which can form in the large chain dimeric partners within the hexadecamer appears to be associated with oxidative stress and protein turnover.

The protein localises to the plastid. The protein resides in the chloroplast. It catalyses the reaction 2 (2R)-3-phosphoglycerate + 2 H(+) = D-ribulose 1,5-bisphosphate + CO2 + H2O. It carries out the reaction D-ribulose 1,5-bisphosphate + O2 = 2-phosphoglycolate + (2R)-3-phosphoglycerate + 2 H(+). Functionally, ruBisCO catalyzes two reactions: the carboxylation of D-ribulose 1,5-bisphosphate, the primary event in carbon dioxide fixation, as well as the oxidative fragmentation of the pentose substrate in the photorespiration process. Both reactions occur simultaneously and in competition at the same active site. This chain is Ribulose bisphosphate carboxylase large chain, found in Amborella trichopoda.